Consider the following 1039-residue polypeptide: Probable inorganic carbon transporter subunit DabA 2 (1039 aa).

4 residues coordinate Zn(2+): Cys-462, Asp-464, His-721, and Cys-736.

The protein belongs to the inorganic carbon transporter (TC 9.A.2) DabA family. Forms a complex with DabB. The cofactor is Zn(2+).

It localises to the cell inner membrane. Its function is as follows. Part of an energy-coupled inorganic carbon pump. The polypeptide is Probable inorganic carbon transporter subunit DabA 2 (Nitrobacter hamburgensis (strain DSM 10229 / NCIMB 13809 / X14)).